The primary structure comprises 87 residues: Small ribosomal subunit protein uS15c (87 aa).

Belongs to the universal ribosomal protein uS15 family. As to quaternary structure, part of the 30S ribosomal subunit.

It is found in the plastid. The protein localises to the chloroplast. In Amborella trichopoda, this protein is Small ribosomal subunit protein uS15c (rps15).